Consider the following 592-residue polypeptide: Imidazole glycerol phosphate synthase hisHF, chloroplastic (592 aa).

The N-terminal 55 residues, 1–55 (MEATAAPFSSIVSSRQNFSSSSSIRASSPASLFLSQKSIGNVNRKFKSPRSLSVR), are a transit peptide targeting the chloroplast. Residues 63 to 271 (VVTLLDYGAG…LHPKLPATQK (209 aa)) form the Glutamine amidotransferase type-1 domain. Residues Cys-141, His-246, and Glu-248 each act as for GATase activity in the active site. A cyclase region spans residues 280–592 (LAKRVIACLD…LQEERIEVRI (313 aa)). Residues Asp-289 and Asp-447 contribute to the active site.

This sequence in the C-terminal section; belongs to the HisA/HisF family.

It localises to the plastid. It is found in the chloroplast. The catalysed reaction is 5-[(5-phospho-1-deoxy-D-ribulos-1-ylimino)methylamino]-1-(5-phospho-beta-D-ribosyl)imidazole-4-carboxamide + L-glutamine = D-erythro-1-(imidazol-4-yl)glycerol 3-phosphate + 5-amino-1-(5-phospho-beta-D-ribosyl)imidazole-4-carboxamide + L-glutamate + H(+). The enzyme catalyses L-glutamine + H2O = L-glutamate + NH4(+). It participates in amino-acid biosynthesis; L-histidine biosynthesis; L-histidine from 5-phospho-alpha-D-ribose 1-diphosphate: step 5/9. In terms of biological role, IGPS catalyzes the conversion of PRFAR and glutamine to IGP, AICAR and glutamate. The glutaminase domain produces the ammonia necessary for the cyclase domain to produce IGP and AICAR from PRFAR. The ammonia is channeled to the active site of the cyclase domain. The protein is Imidazole glycerol phosphate synthase hisHF, chloroplastic (HISN4) of Arabidopsis thaliana (Mouse-ear cress).